We begin with the raw amino-acid sequence, 358 residues long: Peptide chain release factor 1 (358 aa).

The residue at position 236 (Q236) is an N5-methylglutamine.

The protein belongs to the prokaryotic/mitochondrial release factor family. Methylated by PrmC. Methylation increases the termination efficiency of RF1.

It is found in the cytoplasm. Peptide chain release factor 1 directs the termination of translation in response to the peptide chain termination codons UAG and UAA. In Corynebacterium glutamicum (strain ATCC 13032 / DSM 20300 / JCM 1318 / BCRC 11384 / CCUG 27702 / LMG 3730 / NBRC 12168 / NCIMB 10025 / NRRL B-2784 / 534), this protein is Peptide chain release factor 1.